Here is a 602-residue protein sequence, read N- to C-terminus: Adenylosuccinate synthetase (602 aa).

GTP-binding positions include 74–80 (GDEGKGK) and 104–106 (GHT). Asp-75 serves as the catalytic Proton acceptor. Mg(2+) is bound by residues Asp-75 and Gly-104. IMP contacts are provided by residues 75–78 (DEGK), 102–105 (NAGH), Thr-189, Lys-203, Gln-315, Thr-331, and Lys-459. The Proton donor role is filled by His-105. 455-461 (AVTKKPR) contributes to the substrate binding site. GTP-binding positions include Arg-461 and 589 to 591 (GNG).

This sequence belongs to the adenylosuccinate synthetase family. Homodimer. Mg(2+) serves as cofactor.

The protein localises to the cytoplasm. It carries out the reaction IMP + L-aspartate + GTP = N(6)-(1,2-dicarboxyethyl)-AMP + GDP + phosphate + 2 H(+). It functions in the pathway purine metabolism; AMP biosynthesis via de novo pathway; AMP from IMP: step 1/2. In terms of biological role, plays an important role in the salvage pathway for purine nucleotide biosynthesis. Catalyzes the first committed step in the biosynthesis of AMP from IMP. This chain is Adenylosuccinate synthetase, found in Trypanosoma brucei gambiense (strain MHOM/CI/86/DAL972).